The sequence spans 487 residues: GTPase Der (487 aa).

2 EngA-type G domains span residues 5-169 and 178-351; these read PKLA…SREI and IKVA…ANSQ. GTP contacts are provided by residues 11-18, 58-62, 121-124, 184-191, 231-235, and 296-299; these read GRPNVGKS, DTGGI, NKID, GRANVGKS, DTAGI, and NKWD. The KH-like domain occupies 352-439; it reads KRITTHQLNK…IHLKGKTKKD (88 aa). The tract at residues 441-466 is disordered; that stretch reads PVSSLSLTRKQTKSTDQENNEYDELY.

It belongs to the TRAFAC class TrmE-Era-EngA-EngB-Septin-like GTPase superfamily. EngA (Der) GTPase family. Associates with the 50S ribosomal subunit.

GTPase that plays an essential role in the late steps of ribosome biogenesis. This chain is GTPase Der, found in Protochlamydia amoebophila (strain UWE25).